Here is a 338-residue protein sequence, read N- to C-terminus: ATP synthase subunit a (338 aa).

A helical membrane pass occupies residues 15–35; sequence IAVLVMPLLLGFGAPIYAAAE. A disordered region spans residues 45 to 66; that stretch reads AAAVHTDEAHGEAGEHAEGGHG. Positions 49–65 are enriched in basic and acidic residues; the sequence is HTDEAHGEAGEHAEGGH. The next 7 helical transmembrane spans lie at 109–129, 174–194, 199–219, 238–258, 262–282, 287–307, and 308–328; these read HVVFMWLAALILLLVFGYVGN, LLTVFVFILVLNLLGLIPYGA, NINVTLTLSVFTFFITQVSAI, ALWIIMIPIEVIGLFTKPFAL, LFANMTAGHIIILSLIFISFI, IVAIFVSVPFSIFIYLLEIFV, and SFLQAFIFTMLSALFIGLGSA.

This sequence belongs to the ATPase A chain family. F-type ATPases have 2 components, CF(1) - the catalytic core - and CF(0) - the membrane proton channel. CF(1) has five subunits: alpha(3), beta(3), gamma(1), delta(1), epsilon(1). CF(0) has four main subunits: a, b, b' and c.

It localises to the cell inner membrane. Functionally, key component of the proton channel; it plays a direct role in the translocation of protons across the membrane. This Chlorobium phaeobacteroides (strain BS1) protein is ATP synthase subunit a.